Reading from the N-terminus, the 107-residue chain is Ferredoxin (107 aa).

A propeptide spanning residues 1–8 is cleaved from the precursor; sequence MVSGVSRN. 3 residues coordinate [2Fe-2S] cluster: cysteine 45, cysteine 51, and cysteine 54.

The cofactor is [2Fe-2S] cluster.

Its subcellular location is the hydrogenosome. Ferredoxins are iron-sulfur proteins that transfer electrons in a wide variety of metabolic reactions. This chain is Ferredoxin, found in Psalteriomonas lanterna (Amoeboflagellate).